The following is a 101-amino-acid chain: Small ribosomal subunit protein uS14 (101 aa).

This sequence belongs to the universal ribosomal protein uS14 family. Part of the 30S ribosomal subunit. Contacts proteins S3 and S10.

Its function is as follows. Binds 16S rRNA, required for the assembly of 30S particles and may also be responsible for determining the conformation of the 16S rRNA at the A site. The sequence is that of Small ribosomal subunit protein uS14 from Vesicomyosocius okutanii subsp. Calyptogena okutanii (strain HA).